A 385-amino-acid chain; its full sequence is 4-hydroxy-3-methylbut-2-en-1-yl diphosphate synthase (flavodoxin) (385 aa).

Residues cysteine 282, cysteine 285, cysteine 317, and glutamate 324 each contribute to the [4Fe-4S] cluster site.

The protein belongs to the IspG family. [4Fe-4S] cluster is required as a cofactor.

It catalyses the reaction (2E)-4-hydroxy-3-methylbut-2-enyl diphosphate + oxidized [flavodoxin] + H2O + 2 H(+) = 2-C-methyl-D-erythritol 2,4-cyclic diphosphate + reduced [flavodoxin]. The protein operates within isoprenoid biosynthesis; isopentenyl diphosphate biosynthesis via DXP pathway; isopentenyl diphosphate from 1-deoxy-D-xylulose 5-phosphate: step 5/6. Functionally, converts 2C-methyl-D-erythritol 2,4-cyclodiphosphate (ME-2,4cPP) into 1-hydroxy-2-methyl-2-(E)-butenyl 4-diphosphate. This is 4-hydroxy-3-methylbut-2-en-1-yl diphosphate synthase (flavodoxin) from Nocardia farcinica (strain IFM 10152).